The primary structure comprises 288 residues: 4-diphosphocytidyl-2-C-methyl-D-erythritol kinase (288 aa).

K22 is a catalytic residue. Position 104-114 (104-114) interacts with ATP; the sequence is PSQAGLGGGSS. The active site involves D146.

Belongs to the GHMP kinase family. IspE subfamily.

It carries out the reaction 4-CDP-2-C-methyl-D-erythritol + ATP = 4-CDP-2-C-methyl-D-erythritol 2-phosphate + ADP + H(+). Its pathway is isoprenoid biosynthesis; isopentenyl diphosphate biosynthesis via DXP pathway; isopentenyl diphosphate from 1-deoxy-D-xylulose 5-phosphate: step 3/6. In terms of biological role, catalyzes the phosphorylation of the position 2 hydroxy group of 4-diphosphocytidyl-2C-methyl-D-erythritol. The polypeptide is 4-diphosphocytidyl-2-C-methyl-D-erythritol kinase (Protochlamydia amoebophila (strain UWE25)).